A 344-amino-acid chain; its full sequence is C-C chemokine receptor-like 2 (344 aa).

Over 1 to 43 (MANYTLAPEDEYDVLIEGELESDEAEQCDRYDTWALSAQLVPS) the chain is Extracellular. N-linked (GlcNAc...) asparagine glycosylation is present at asparagine 3. A helical membrane pass occupies residues 44–64 (LCSAVFVVGVLDNLLVVLILV). Over 65–74 (KYKGLKRVEN) the chain is Cytoplasmic. Residues 75 to 95 (IYLLNLAVSNLCFLLTLPFWA) traverse the membrane as a helical segment. Over 96–104 (HAGGDPMCK) the chain is Extracellular. Cysteines 103 and 181 form a disulfide. The helical transmembrane segment at 105 to 125 (ILIGLYFVGLYSETFFNCLLT) threads the bilayer. Over 126 to 148 (LQRYLVFLHKGNFFSVRRRVPCG) the chain is Cytoplasmic. A helical transmembrane segment spans residues 149–169 (IVTSAVAWVTAILATVPEFAV). The Extracellular portion of the chain corresponds to 170-198 (YKPQMEDPKYKCAFSRTPFLPADETFWKH). A helical transmembrane segment spans residues 199–219 (FLTLKMNVSVLVFPLFIFTFL). Topologically, residues 220–238 (YVQMRKTLRFGEQRYSLFK) are cytoplasmic. A helical membrane pass occupies residues 239 to 259 (LVFAIMVVFLLMWAPYNIALF). At 260 to 281 (LSTFKEHFSLSDCKSNYNLDKS) the chain is on the extracellular side. Residues 282–302 (VLITKLIATTHCCVNPLLYVF) traverse the membrane as a helical segment. Residues 303–344 (LDGTFRKYLCRFFHRRSNTPRQPRRRFAQGTSREEPDRSTEV) are Cytoplasmic-facing. Residues 323 to 344 (RQPRRRFAQGTSREEPDRSTEV) are disordered. Positions 334 to 344 (SREEPDRSTEV) are enriched in basic and acidic residues.

This sequence belongs to the G-protein coupled receptor 1 family.

The protein localises to the cell membrane. In terms of biological role, receptor for CCL19 and chemerin/RARRES2. Does not appear to be a signaling receptor, but may have a role in modulating chemokine-triggered immune responses by capturing and internalizing CCL19 or by presenting RARRES2 ligand to CMKLR1, a functional signaling receptor. Plays a critical role for the development of Th2 responses. The polypeptide is C-C chemokine receptor-like 2 (CCRL2) (Macaca mulatta (Rhesus macaque)).